Reading from the N-terminus, the 85-residue chain is Coiled-coil-helix-coiled-coil-helix domain-containing protein 7 (85 aa).

The region spanning 13-55 (SNPCLEETDASTKCMDDNRYEKDLCTPYFVKYKNCRKFWNGIM) is the CHCH domain. Short sequence motifs (cx9C motif) lie at residues 16-26 (CLEETDASTKC) and 37-47 (CTPYFVKYKNC). 2 disulfides stabilise this stretch: Cys-16–Cys-47 and Cys-26–Cys-37.

The protein belongs to the CHCHD7 family.

The protein localises to the mitochondrion intermembrane space. In Xenopus tropicalis (Western clawed frog), this protein is Coiled-coil-helix-coiled-coil-helix domain-containing protein 7 (chchd7).